A 695-amino-acid chain; its full sequence is Adhesion G protein-coupled receptor F4 (695 aa).

An N-terminal signal peptide occupies residues 1-21 (MKMKSQATMICCLVFFLSTEC). Over 22 to 406 (SHYRSKIHLK…TDKVLDYITC (385 aa)) the chain is Extracellular. Residues N61, N169, N177, N209, N229, N250, N257, N263, N264, N286, N309, and N340 are each glycosylated (N-linked (GlcNAc...) asparagine). The region spanning 249–397 (HNTSEKSLNF…SILMSSKSMT (149 aa)) is the GAIN-B domain. 2 disulfides stabilise this stretch: C349–C376 and C364–C378. Residues 349 to 397 (CVGWHSKKRRWDEKACQMMLDIRNEVKCRCNYTSVVMSFSILMSSKSMT) form a GPS region. The N-linked (GlcNAc...) asparagine glycan is linked to N379. Residues 407-427 (IGLSVSILSLVLCLIIEATVW) form a helical membrane-spanning segment. The Cytoplasmic portion of the chain corresponds to 428–440 (SRVVVTEISYMRH). The chain crosses the membrane as a helical span at residues 441 to 461 (VCIVNIAVSLLTANVWFIIGS). Residues 462 to 485 (HFNIKAQDYNMCVAVTFFSHFFYL) are Extracellular-facing. The chain crosses the membrane as a helical span at residues 486–506 (SLFFWMLFKALLIIYGILVIF). Residues 507–515 (RRMMKSRMM) are Cytoplasmic-facing. A helical membrane pass occupies residues 516–536 (VIGFAIGYGCPLIIAVTTVAI). Topologically, residues 537 to 561 (TEPEKGYMRPEACWLNWDNTKALLA) are extracellular. The chain crosses the membrane as a helical span at residues 562–582 (FAIPAFVIVAVNLIVVLVVAV). Residues 583 to 606 (NTQRPSIGSSKSQDVVIIMRISKN) lie on the Cytoplasmic side of the membrane. Residues 607-627 (VAILTPLLGLTWGFGIATLIE) form a helical membrane-spanning segment. At 628 to 634 (GTSLTFH) the chain is on the extracellular side. The helical transmembrane segment at 635 to 655 (IIFALLNAFQGFFILLFGTIM) threads the bilayer. The Cytoplasmic segment spans residues 656 to 695 (DHKIRDALRMRMSSLKGKSRAAENASLGPTNGSKLMNRQG). A disordered region spans residues 674–695 (SRAAENASLGPTNGSKLMNRQG). Residues 682–695 (LGPTNGSKLMNRQG) show a composition bias toward polar residues.

It belongs to the G-protein coupled receptor 2 family. Adhesion G-protein coupled receptor (ADGR) subfamily.

The protein resides in the membrane. Its function is as follows. Orphan receptor. In Homo sapiens (Human), this protein is Adhesion G protein-coupled receptor F4 (ADGRF4).